The primary structure comprises 250 residues: 2,3-bisphosphoglycerate-dependent phosphoglycerate mutase (250 aa).

Substrate contacts are provided by residues 10 to 17, 23 to 24, Arg62, 89 to 92, Lys100, 116 to 117, and 185 to 186; these read RHGESQWN, TG, ERHY, RR, and GN. The active-site Tele-phosphohistidine intermediate is His11. Catalysis depends on Glu89, which acts as the Proton donor/acceptor.

It belongs to the phosphoglycerate mutase family. BPG-dependent PGAM subfamily. As to quaternary structure, homodimer.

The enzyme catalyses (2R)-2-phosphoglycerate = (2R)-3-phosphoglycerate. Its pathway is carbohydrate degradation; glycolysis; pyruvate from D-glyceraldehyde 3-phosphate: step 3/5. Catalyzes the interconversion of 2-phosphoglycerate and 3-phosphoglycerate. The protein is 2,3-bisphosphoglycerate-dependent phosphoglycerate mutase of Pectobacterium carotovorum subsp. carotovorum (strain PC1).